Here is a 1830-residue protein sequence, read N- to C-terminus: Guanine nucleotide exchange factor SPIKE 1 (1830 aa).

Met-1 is modified (N-acetylmethionine). The tract at residues 285-304 (NTGESASPSSPLAPSMTASS) is disordered. A compositionally biased stretch (low complexity) spans 289–304 (SASPSSPLAPSMTASS). The C2 DOCK-type domain occupies 463–622 (FHCLYVYPVA…NIFKLRLRLC (160 aa)). Ser-1051 is modified (phosphoserine). Thr-1079 carries the post-translational modification Phosphothreonine. Ser-1095 carries the phosphoserine modification. The region spanning 1379–1828 (MAFAPVPDLH…LSHYIPAILS (450 aa)) is the DOCKER domain.

This sequence belongs to the DOCK family. Homodimer. Component of SCAR/WAVE and ARP2/3 complexes. Interacts directly with ARAC4/ROP2, ARAC1/ROP3, ARAC5/ROP4, ARAC6/ROP5, ARAC8/ROP10, ARAC9/ROP8, SCAR1, SCAR2, SCAR3, SCAR4, ABI1, ABI2, ABI3 and ABI4. Binds to the inactive GDP-bound form of ARAC3/ROP6. As to expression, expressed ubiquitously, in roots and aerial organs.

The protein resides in the cytoplasm. It is found in the endoplasmic reticulum membrane. It localises to the nucleus. Its function is as follows. Guanine nucleotide exchange factor (GEF) for Rho and Rac. GEF proteins activate small GTPases by exchanging bound GDP for free GTP. Controls actin polymerization via the two heteromeric complexes WAVE and actin-related protein (ARP) 2/3. Involved in cytoskeletal reorganization required for cell shape (e.g. trichome and cotyledon) control and tissue development. Prevents cortical microtubules organization into parallel arrays oriented perpendicular to the axis of cell elongation to limit anisotropic cell growth during petal development, probably by triggering ARAC4/ROP2 and ARAC3/ROP6 activity. Promotes polarized growth and cell-cell adhesion in the leaf epidermis probably by promoting the formation of endoplasmic reticulum (ER) exit site (ERES) and/or trafficking between the ER and Golgi. Triggers ARAC3/ROP6 activation required for auxin-mediated inhibition of PIN2 internalization during gravitropic responses (, PubMed:22683260). In Arabidopsis thaliana (Mouse-ear cress), this protein is Guanine nucleotide exchange factor SPIKE 1.